Reading from the N-terminus, the 479-residue chain is Ribosomal RNA small subunit methyltransferase F (479 aa).

S-adenosyl-L-methionine contacts are provided by residues 125 to 131, E149, D176, and D194; that span reads AAAPGSK. Residue C247 is the Nucleophile of the active site.

The protein belongs to the class I-like SAM-binding methyltransferase superfamily. RsmB/NOP family.

It localises to the cytoplasm. The catalysed reaction is cytidine(1407) in 16S rRNA + S-adenosyl-L-methionine = 5-methylcytidine(1407) in 16S rRNA + S-adenosyl-L-homocysteine + H(+). Specifically methylates the cytosine at position 1407 (m5C1407) of 16S rRNA. This chain is Ribosomal RNA small subunit methyltransferase F, found in Shigella boydii serotype 18 (strain CDC 3083-94 / BS512).